A 251-amino-acid chain; its full sequence is Hydroxyacylglutathione hydrolase (251 aa).

Positions 53, 55, 57, 58, 110, 127, and 165 each coordinate Zn(2+).

The protein belongs to the metallo-beta-lactamase superfamily. Glyoxalase II family. In terms of assembly, monomer. The cofactor is Zn(2+).

It catalyses the reaction an S-(2-hydroxyacyl)glutathione + H2O = a 2-hydroxy carboxylate + glutathione + H(+). The protein operates within secondary metabolite metabolism; methylglyoxal degradation; (R)-lactate from methylglyoxal: step 2/2. Thiolesterase that catalyzes the hydrolysis of S-D-lactoyl-glutathione to form glutathione and D-lactic acid. The polypeptide is Hydroxyacylglutathione hydrolase (Shigella boydii serotype 4 (strain Sb227)).